The primary structure comprises 154 residues: Interleukin-2 (154 aa).

Positions 1–20 are cleaved as a signal peptide; the sequence is MYKMQLLCCIALTLALMANG. An O-linked (GalNAc...) threonine glycan is attached at T23. Cysteines 78 and 126 form a disulfide.

The protein belongs to the IL-2 family.

Its subcellular location is the secreted. In terms of biological role, cytokine produced by activated CD4-positive helper T-cells and to a lesser extend activated CD8-positive T-cells and natural killer (NK) cells that plays pivotal roles in the immune response and tolerance. Binds to a receptor complex composed of either the high-affinity trimeric IL-2R (IL2RA/CD25, IL2RB/CD122 and IL2RG/CD132) or the low-affinity dimeric IL-2R (IL2RB and IL2RG). Interaction with the receptor leads to oligomerization and conformation changes in the IL-2R subunits resulting in downstream signaling starting with phosphorylation of JAK1 and JAK3. In turn, JAK1 and JAK3 phosphorylate the receptor to form a docking site leading to the phosphorylation of several substrates including STAT5. This process leads to activation of several pathways including STAT, phosphoinositide-3-kinase/PI3K and mitogen-activated protein kinase/MAPK pathways. Functions as a T-cell growth factor and can increase NK-cell cytolytic activity as well. Promotes strong proliferation of activated B-cells and subsequently immunoglobulin production. Plays a pivotal role in regulating the adaptive immune system by controlling the survival and proliferation of regulatory T-cells, which are required for the maintenance of immune tolerance. Moreover, participates in the differentiation and homeostasis of effector T-cell subsets, including Th1, Th2, Th17 as well as memory CD8-positive T-cells. This is Interleukin-2 (IL2) from Sus scrofa (Pig).